The following is a 120-amino-acid chain: MDYEFLRDITGVVKVRMSMGHEVVGHWFNEEVKENLALLDEVEQAARALKGSERSWQRAGHEYTLWMDGEEVMVRANQLEFTGDEMEEGMNYYDEESLSLCGVEDFLQVVAAYRHFIQQR.

Belongs to the UPF0231 family.

In Citrobacter koseri (strain ATCC BAA-895 / CDC 4225-83 / SGSC4696), this protein is UPF0231 protein CKO_03249.